A 343-amino-acid polypeptide reads, in one-letter code: Uroporphyrinogen decarboxylase (343 aa).

Substrate contacts are provided by residues 25 to 29 (RQAGR), Asp-75, Tyr-152, Ser-207, and His-323.

Belongs to the uroporphyrinogen decarboxylase family. In terms of assembly, homodimer.

The protein resides in the cytoplasm. The enzyme catalyses uroporphyrinogen III + 4 H(+) = coproporphyrinogen III + 4 CO2. It participates in porphyrin-containing compound metabolism; protoporphyrin-IX biosynthesis; coproporphyrinogen-III from 5-aminolevulinate: step 4/4. Catalyzes the decarboxylation of four acetate groups of uroporphyrinogen-III to yield coproporphyrinogen-III. The chain is Uroporphyrinogen decarboxylase from Jannaschia sp. (strain CCS1).